Consider the following 231-residue polypeptide: Lytic polysaccharide monooxygenase-like protein X325 (231 aa).

An N-terminal signal peptide occupies residues 1–17; sequence MRLSLLVTLALTALIEA. Residue His-18 coordinates Cu(2+). 6 N-linked (GlcNAc...) asparagine glycosylation sites follow: Asn-34, Asn-55, Asn-98, Asn-133, Asn-174, and Asn-180. Disulfide bonds link Cys-47-Cys-157 and Cys-122-Cys-178. A lipid anchor (GPI-anchor amidated isoleucine) is attached at Ile-202. The propeptide at 203–231 is removed in mature form; it reads ASTTTGSAPRYYSWAGWLPLVAGAIWMAL.

The protein belongs to the X325 family. Cu(2+) serves as cofactor.

The protein localises to the cell membrane. Its function is as follows. Lytic polysaccharide monooxygenase-like protein that has diverged to biological functions other than polysaccharide degradation since it does not perform oxidative cleavage of polysaccharides. Acts as a cell surface-bound protein that functions in the copper-accumulation pathway. May also act as the major cell wall sensor that regulates MAP kinase-dependent hyphal anastomosis, the fusion of hyphal cells. This Hypocrea jecorina (strain QM6a) (Trichoderma reesei) protein is Lytic polysaccharide monooxygenase-like protein X325.